A 213-amino-acid chain; its full sequence is Large ribosomal subunit protein uL3 (213 aa).

Gln-151 is subject to N5-methylglutamine.

Belongs to the universal ribosomal protein uL3 family. In terms of assembly, part of the 50S ribosomal subunit. Forms a cluster with proteins L14 and L19. Methylated by PrmB.

Its function is as follows. One of the primary rRNA binding proteins, it binds directly near the 3'-end of the 23S rRNA, where it nucleates assembly of the 50S subunit. This chain is Large ribosomal subunit protein uL3, found in Rhizobium leguminosarum bv. trifolii (strain WSM2304).